Here is a 119-residue protein sequence, read N- to C-terminus: Large ribosomal subunit protein bL17 (119 aa).

Belongs to the bacterial ribosomal protein bL17 family. Part of the 50S ribosomal subunit. Contacts protein L32.

This chain is Large ribosomal subunit protein bL17, found in Acholeplasma laidlawii (strain PG-8A).